The sequence spans 161 residues: DNA-directed RNA polymerase 18 kDa subunit (161 aa).

This sequence belongs to the poxviridae DNA-directed RNA polymerase 18 kDa subunit family. As to quaternary structure, the DNA-dependent RNA polymerase used for intermediate and late genes expression consists of eight subunits Rpo30/OPG66, Rpo7/OPG90, Rpo22/OPG103, Rpo147/OPG105, Rpo18/OPG119, Rpo19/OPG131, Rpo132/OPG151 and Rpo35/OPG156. The same holoenzyme, with the addition of the transcription-specificity factor OPG109, is used for early gene expression. Post-translationally, apparently non-glycosylated.

The protein resides in the virion. It catalyses the reaction RNA(n) + a ribonucleoside 5'-triphosphate = RNA(n+1) + diphosphate. In terms of biological role, part of the DNA-dependent RNA polymerase which catalyzes the transcription of viral DNA into RNA using the four ribonucleoside triphosphates as substrates. Responsible for the transcription of early, intermediate and late genes. DNA-dependent RNA polymerase associates with the early transcription factor (ETF), itself composed of OPG118 and OPG133, thereby allowing the early genes transcription. Late transcription, and probably also intermediate transcription, require newly synthesized RNA polymerase. The protein is DNA-directed RNA polymerase 18 kDa subunit (OPG119) of Cynomys gunnisoni (Gunnison's prairie dog).